The sequence spans 115 residues: Anamorsin homolog 2 (115 aa).

The interval 30 to 115 (VKEATKGEDC…KVKLNLTDDI (86 aa)) is disordered. Positions 39, 46, 49, and 51 each coordinate [2Fe-2S] cluster. Residues 39–51 (CTTRRRACKNCTC) are fe-S binding site A. [4Fe-4S] cluster is bound by residues Cys77, Cys80, Cys88, and Cys91. 2 consecutive short sequence motifs (cx2C motif) follow at residues 77 to 80 (CGNC) and 88 to 91 (CATC). The tract at residues 77 to 91 (CGNCAKGDAFRCATC) is fe-S binding site B.

It belongs to the anamorsin family. As to quaternary structure, monomer. The cofactor is [2Fe-2S] cluster. [4Fe-4S] cluster serves as cofactor.

The protein localises to the cytoplasm. It is found in the mitochondrion intermembrane space. Its function is as follows. Component of the cytosolic iron-sulfur (Fe-S) protein assembly (CIA) machinery. Required for the maturation of extramitochondrial Fe-S proteins. Part of an electron transfer chain functioning in an early step of cytosolic Fe-S biogenesis, facilitating the de novo assembly of a [4Fe-4S] cluster on the cytosolic Fe-S scaffold complex. Electrons are transferred from NADPH via a FAD- and FMN-containing diflavin oxidoreductase. Together with the diflavin oxidoreductase, also required for the assembly of the diferric tyrosyl radical cofactor of ribonucleotide reductase (RNR), probably by providing electrons for reduction during radical cofactor maturation in the catalytic small subunit. This Trypanosoma cruzi (strain CL Brener) protein is Anamorsin homolog 2.